We begin with the raw amino-acid sequence, 430 residues long: Aspartate aminotransferase, mitochondrial (430 aa).

The transit peptide at 1–29 directs the protein to the mitochondrion; sequence MALLHSGRVLPGIAAAFHPGLAAAASARA. Position 48 is a phosphothreonine (threonine 48). Residue lysine 59 is modified to N6-acetyllysine. A substrate-binding site is contributed by glycine 65. Residue lysine 73 is modified to N6-acetyllysine; alternate. The residue at position 73 (lysine 73) is an N6-succinyllysine; alternate. The residue at position 82 (lysine 82) is an N6-acetyllysine. The residue at position 90 (lysine 90) is an N6-acetyllysine; alternate. Lysine 90 is modified (N6-succinyllysine; alternate). Tyrosine 96 is subject to 3'-nitrotyrosine; alternate. Tyrosine 96 is modified (phosphotyrosine; alternate). 2 positions are modified to N6-acetyllysine; alternate: lysine 107 and lysine 122. 2 positions are modified to N6-succinyllysine; alternate: lysine 107 and lysine 122. Position 143 is a phosphoserine (serine 143). Residue lysine 159 is modified to N6-acetyllysine; alternate. Lysine 159 carries the post-translational modification N6-succinyllysine; alternate. Residue tryptophan 162 participates in substrate binding. The residue at position 185 (lysine 185) is an N6-acetyllysine; alternate. Lysine 185 is subject to N6-succinyllysine; alternate. Asparagine 215 lines the substrate pocket. Lysine 227 carries the post-translational modification N6-succinyllysine. Lysine 234 is subject to N6-acetyllysine. An N6-acetyllysine; alternate mark is found at lysine 279 and lysine 296. Residue lysine 279 is modified to N6-(pyridoxal phosphate)lysine; alternate. Position 296 is an N6-succinyllysine; alternate (lysine 296). Residue lysine 302 is modified to N6-acetyllysine. Lysine 309 carries the N6-acetyllysine; alternate modification. Position 309 is an N6-succinyllysine; alternate (lysine 309). An Asymmetric dimethylarginine modification is found at arginine 313. Residue threonine 333 is modified to Phosphothreonine. Lysine 338 is modified (N6-acetyllysine; alternate). Position 338 is an N6-succinyllysine; alternate (lysine 338). The residue at position 345 (lysine 345) is an N6-acetyllysine. The residue at position 363 (lysine 363) is an N6-acetyllysine; alternate. Position 363 is an N6-succinyllysine; alternate (lysine 363). 2 positions are modified to N6-acetyllysine: lysine 364 and lysine 387. An N6-acetyllysine; alternate mark is found at lysine 396 and lysine 404. Residues lysine 396 and lysine 404 each carry the N6-succinyllysine; alternate modification. Arginine 407 lines the substrate pocket.

The protein belongs to the class-I pyridoxal-phosphate-dependent aminotransferase family. As to quaternary structure, homodimer. Pyridoxal 5'-phosphate is required as a cofactor.

Its subcellular location is the mitochondrion matrix. The protein localises to the cell membrane. It carries out the reaction L-aspartate + 2-oxoglutarate = oxaloacetate + L-glutamate. It catalyses the reaction L-kynurenine + 2-oxoglutarate = kynurenate + L-glutamate + H2O. Catalyzes the irreversible transamination of the L-tryptophan metabolite L-kynurenine to form kynurenic acid (KA). As a member of the malate-aspartate shuttle, it has a key role in the intracellular NAD(H) redox balance. Is important for metabolite exchange between mitochondria and cytosol, and for amino acid metabolism. Facilitates cellular uptake of long-chain free fatty acids. This chain is Aspartate aminotransferase, mitochondrial, found in Homo sapiens (Human).